Here is a 501-residue protein sequence, read N- to C-terminus: Cystine/glutamate transporter (501 aa).

The Cytoplasmic portion of the chain corresponds to 1–43 (MVRKPVVSTISKGGYLQGNVNGRLPSLGNKEPPGQEKVQLKRK). A Phosphoserine modification is found at Ser-26. A helical membrane pass occupies residues 44 to 64 (VTLLRGVSIIIGTIIGAGIFI). At 65 to 74 (SPKGVLQNTG) the chain is on the extracellular side. A helical transmembrane segment spans residues 75–95 (SVGMSLTIWTVCGVLSLFGAL). At 96 to 101 (SYAELG) the chain is on the cytoplasmic side. The stretch at 102 to 116 (TTIKKSGGHYTYILE) is an intramembrane region. Topologically, residues 117-130 (VFGPLPAFVRVWVE) are cytoplasmic. Residues 131-150 (LLIIRPAATAVISLAFGRYI) form a helical membrane-spanning segment. Arg-135 contacts L-glutamate. Topologically, residues 151–163 (LEPFFIQCEIPEL) are extracellular. The chain crosses the membrane as a helical span at residues 164–179 (AIKLITAVGITVVMVL). Residues 180–193 (NSMSVSWSARIQIF) lie on the Cytoplasmic side of the membrane. A helical transmembrane segment spans residues 194-210 (LTFCKLTAILIIIVPGV). At 211–234 (MQLIKGQTQNFKDAFSGRDSSITR) the chain is on the extracellular side. The helical transmembrane segment at 235–255 (LPLAFYYGMYAYAGWFYLNFV) threads the bilayer. Residue Tyr-244 coordinates L-glutamate. At 256 to 265 (TEEVENPEKT) the chain is on the cytoplasmic side. A helical transmembrane segment spans residues 266-286 (IPLAICISMAIVTIGYVLTNV). The Extracellular portion of the chain corresponds to 287-317 (AYFTTINAEELLLSNAVAVTFSERLLGNFSL). The N-linked (GlcNAc...) asparagine glycan is linked to Asn-314. Residues 318 to 338 (AVPIFVALSCFGSMNGGVFAV) form a helical membrane-spanning segment. Residues 339–364 (SRLFYVASREGHLPEILSMIHVRKHT) lie on the Cytoplasmic side of the membrane. A helical membrane pass occupies residues 365 to 385 (PLPAVIVLHPLTMIMLFSGDL). Over 386–387 (DS) the chain is Extracellular. A helical membrane pass occupies residues 388-408 (LLNFLSFARWLFIGLAVAGLI). Residues 409–422 (YLRYKCPDMHRPFK) are Cytoplasmic-facing. A helical membrane pass occupies residues 423 to 443 (VPLFIPALFSFTCLFMVALSL). Residues 444 to 449 (YSDPFS) are Extracellular-facing. A helical membrane pass occupies residues 450–470 (TGIGSVITLTGVPAYYLFIIW). Topologically, residues 471 to 501 (DKKPRWFRIMSEKITRTLQIILEVVPEEDKL) are cytoplasmic.

This sequence belongs to the amino acid-polyamine-organocation (APC) superfamily. L-type amino acid transporter (LAT) (TC 2.A.3.8) family. As to quaternary structure, disulfide-linked heterodimer with the amino acid transport protein SLC3A2/4F2hc; this interaction mediates cell membrane localization.

The protein resides in the cell membrane. It localises to the cell projection. It is found in the microvillus membrane. It catalyses the reaction L-cystine(out) + L-glutamate(in) = L-cystine(in) + L-glutamate(out). The catalysed reaction is an L-alpha-amino acid(in) + L-kynurenine(out) = an L-alpha-amino acid(out) + L-kynurenine(in). It carries out the reaction N-acetyl-L-cysteine(out) + L-glutamate(in) = N-acetyl-L-cysteine(in) + L-glutamate(out). In terms of biological role, heterodimer with SLC3A2, that functions as an antiporter by mediating the exchange of extracellular anionic L-cystine and intracellular L-glutamate across the cellular plasma membrane. Provides L-cystine for the maintenance of the redox balance between extracellular L-cystine and L-cysteine and for the maintenance of the intracellular levels of glutathione that is essential for cells protection from oxidative stress. The transport is sodium-independent, electroneutral with a stoichiometry of 1:1, and is drove by the high intracellular concentration of L-glutamate and the intracellular reduction of L-cystine. In addition, mediates the import of L-kynurenine leading to anti-ferroptotic signaling propagation required to maintain L-cystine and glutathione homeostasis. Moreover, mediates N-acetyl-L-cysteine uptake into the placenta leading to subsequently down-regulation of pathways associated with oxidative stress, inflammation and apoptosis. In vitro can also transport L-aspartate. May participate in astrocyte and meningeal cell proliferation during development and can provide neuroprotection by promoting glutathione synthesis and delivery from non-neuronal cells such as astrocytes and meningeal cells to immature neurons. Controls the production of pheomelanin pigment directly. In Pongo abelii (Sumatran orangutan), this protein is Cystine/glutamate transporter.